Reading from the N-terminus, the 106-residue chain is UPF0060 membrane protein Rleg2_1018 (106 aa).

4 consecutive transmembrane segments (helical) span residues 4-24 (IIYA…WAWL), 30-50 (VWWL…LTLV), 58-78 (TFAA…WLVE), and 86-106 (DIGG…GPRG).

It belongs to the UPF0060 family.

The protein resides in the cell inner membrane. This is UPF0060 membrane protein Rleg2_1018 from Rhizobium leguminosarum bv. trifolii (strain WSM2304).